The following is a 293-amino-acid chain: MRVLVGGGTGFIGTALTQLLNARGHEVTLVSRKPGPGRITWDELAASGLPSCDAAVNLAGENILNPLRRWNETFQKEVIGSRLETTQLLAKAITKAPQPPKAWVLVTGVAYYQPSLTAEYDEDSPGGDFDFFSNLVTKWEAAARLPGDSTRQVVVRSGVVLGRGGGAMGHMLLPFRLGLGGPIGSGHQFFPWIHIGDLAGILTHALEANHVHGVLNGVAPSSATNAEFAQTLGAALGRRAFIPLPSAVVQAVFGRQRAIMLLEGQKVIPQRTLATGYQYSFPELGAALKEIVA.

NADP(+) contacts are provided by residues 31–32 (SR), 58–59 (LA), E77, R82, and V160.

This sequence belongs to the NAD(P)-dependent epimerase/dehydratase family. SDR39U1 subfamily. Expressed in adrenal gland.

Its function is as follows. Putative NADP-dependent oxidoreductase. The polypeptide is Epimerase family protein SDR39U1 (SDR39U1) (Homo sapiens (Human)).